The sequence spans 389 residues: MPKLNCHHFEQNRCNSCQWLHKSYTEQLAEKTSDLKRLVSPYLLQSTEFLPAVTSPLAHFRNKAKMVVTGSVERPILGILNDDGTGTDLTDCPLYPQAFTPLFPILKTFIGRAGLVPYNVAKKRGELKYILITQSQHNQSLMIRFVLRSELKRPLVERELPMLLAQLPEKSVVSLNIQPQHSAILEGEQEIFLTEQQVLEERFNQIPLFIRPQGFFQTNPTVASQLYHTAQEWIKERPITQLWDLFCGVGGFGLHCANTLQTNNPNVALTGIEISASAIASATKSAQQLGLQNVKFASLDSAQFALNEQGTTPDLVIVNPPRRGIGKPLAEFINQLGSPYLIYSSCNAETMAKDFASLSHYELKKVQLFDMFPHTAHYEVLTFLVNKII.

Positions 6, 14, 17, and 92 each coordinate [4Fe-4S] cluster. 4 residues coordinate S-adenosyl-L-methionine: Q217, F246, E273, and N319. Residue C346 is the Nucleophile of the active site.

This sequence belongs to the class I-like SAM-binding methyltransferase superfamily. RNA M5U methyltransferase family. RlmC subfamily.

The enzyme catalyses uridine(747) in 23S rRNA + S-adenosyl-L-methionine = 5-methyluridine(747) in 23S rRNA + S-adenosyl-L-homocysteine + H(+). In terms of biological role, catalyzes the formation of 5-methyl-uridine at position 747 (m5U747) in 23S rRNA. This is 23S rRNA (uracil(747)-C(5))-methyltransferase RlmC from Glaesserella parasuis serovar 5 (strain SH0165) (Haemophilus parasuis).